We begin with the raw amino-acid sequence, 225 residues long: Probable methylthioribulose-1-phosphate dehydratase (225 aa).

Residue C86 participates in substrate binding. Residues H104 and H106 each contribute to the Zn(2+) site. E127 serves as the catalytic Proton donor/acceptor. H183 is a Zn(2+) binding site.

This sequence belongs to the aldolase class II family. MtnB subfamily. It depends on Zn(2+) as a cofactor.

Its subcellular location is the cytoplasm. It catalyses the reaction 5-(methylsulfanyl)-D-ribulose 1-phosphate = 5-methylsulfanyl-2,3-dioxopentyl phosphate + H2O. The protein operates within amino-acid biosynthesis; L-methionine biosynthesis via salvage pathway; L-methionine from S-methyl-5-thio-alpha-D-ribose 1-phosphate: step 2/6. In terms of biological role, catalyzes the dehydration of methylthioribulose-1-phosphate (MTRu-1-P) into 2,3-diketo-5-methylthiopentyl-1-phosphate (DK-MTP-1-P). In Leishmania infantum, this protein is Probable methylthioribulose-1-phosphate dehydratase.